The sequence spans 264 residues: tRNA pseudouridine synthase A (264 aa).

The active-site Nucleophile is D51. Y109 serves as a coordination point for substrate.

It belongs to the tRNA pseudouridine synthase TruA family. As to quaternary structure, homodimer.

The enzyme catalyses uridine(38/39/40) in tRNA = pseudouridine(38/39/40) in tRNA. In terms of biological role, formation of pseudouridine at positions 38, 39 and 40 in the anticodon stem and loop of transfer RNAs. The chain is tRNA pseudouridine synthase A from Vibrio vulnificus (strain CMCP6).